A 103-amino-acid polypeptide reads, in one-letter code: Integration host factor subunit beta (103 aa).

This sequence belongs to the bacterial histone-like protein family. As to quaternary structure, heterodimer of an alpha and a beta chain.

Functionally, this protein is one of the two subunits of integration host factor, a specific DNA-binding protein that functions in genetic recombination as well as in transcriptional and translational control. The sequence is that of Integration host factor subunit beta from Bradyrhizobium sp. (strain BTAi1 / ATCC BAA-1182).